The chain runs to 249 residues: MKLNIAYPRNGTVKQFEISDEVLRRVQLQDYRLGNEVDGAIFGSEFKGYIFRLRGGSDKDGFPMVPGVLASSRVSLLVKRGAIGFNTFRGYQGERRRKNVRGCVLASDIALVNVTISKVGDQPIEGVTDTTAPRRLGPKRASKIRKLFNLSRTEDVRKYVVRRRVVKSGKKDRLKAPKIQRLITPRVKARRAKKAKDAIAKVRASAAERREYLRLIASNRRALRQRDHSKKHTRKVHAQRAEVAAFQKK.

Basic residues predominate over residues 223-238 (LRQRDHSKKHTRKVHA). The tract at residues 223 to 249 (LRQRDHSKKHTRKVHAQRAEVAAFQKK) is disordered.

This sequence belongs to the eukaryotic ribosomal protein eS6 family. Post-translationally, ribosomal protein S6 is the major substrate of protein kinases in eukaryote ribosomes.

In terms of biological role, component of the 40S small ribosomal subunit. Plays an important role in controlling cell growth and proliferation through the selective translation of particular classes of mRNA. This chain is Small ribosomal subunit protein eS6 (RPS6), found in Leishmania major.